A 981-amino-acid chain; its full sequence is Polyhomeotic-like protein 3 (981 aa).

The segment covering 1-28 (MDSEPSSGTSVSTTASSTTTTTITTSSS) has biased composition (low complexity). Disordered regions lie at residues 1-33 (MDSEPSSGTSVSTTASSTTTTTITTSSSRMQQP), 102-127 (LSSGRPSTSPTGSVTQQSSMSQTSIL), 224-280 (LSSS…TAVT), and 307-407 (QIPL…SQSP). Residues 224–255 (LSSSQNGSPKSAGQTQSLTICHNKTTVTSSKI) show a composition bias toward polar residues. Ser-231, Ser-261, Ser-269, and Ser-312 each carry phosphoserine. Residues 256–266 (SQRDPSPESKK) are compositionally biased toward basic and acidic residues. Over residues 321-340 (QLLLQQQQQQIQPITLQSPS) the composition is skewed to low complexity. Residues 360–373 (APSNAQPQHCSPVQ) are compositionally biased toward polar residues. Over residues 381–395 (VSPNQAQSAQQSVVV) the composition is skewed to low complexity. Phosphothreonine is present on residues Thr-607 and Thr-612. Ser-614 is modified (phosphoserine). A disordered region spans residues 650–690 (KSPSDPTHASAPAPPLLIPAASTRSSSTSLASSTPSLENKP). The span at 667–686 (IPAASTRSSSTSLASSTPSL) shows a compositional bias: low complexity. Residues Lys-689 and Lys-730 each participate in a glycyl lysine isopeptide (Lys-Gly) (interchain with G-Cter in SUMO2) cross-link. An HD1 motif is present at residues 689-718 (KPPQAIVKPQILTHVIEGFVIQEGLEPFPV). Phosphoserine occurs at positions 759 and 760. The FCS-type zinc-finger motif lies at 774-808 (EEMDSELLKCEFCGKMGYPNEFLRSKRFCTMSCAK). Zn(2+) contacts are provided by Cys-783, Cys-786, Cys-802, and Cys-806. Lys-808 is covalently cross-linked (Glycyl lysine isopeptide (Lys-Gly) (interchain with G-Cter in SUMO2)). Disordered stretches follow at residues 825 to 844 (RKPDNQSLGHRGRRPSGPEG) and 863 to 888 (EDVASHEDPVPSAMTTRLRRQSERER). Residues 917 to 981 (WTVDDVWAFI…CARINSLKDS (65 aa)) enclose the SAM domain.

Component of a PRC1-like complex. As to expression, ubiquitous expression.

It is found in the nucleus. Component of a Polycomb group (PcG) multiprotein PRC1-like complex, a complex class required to maintain the transcriptionally repressive state of many genes, including Hox genes, throughout development. PcG PRC1 complex acts via chromatin remodeling and modification of histones; it mediates monoubiquitination of histone H2A 'Lys-119', rendering chromatin heritably changed in its expressibility. The polypeptide is Polyhomeotic-like protein 3 (Phc3) (Mus musculus (Mouse)).